Reading from the N-terminus, the 267-residue chain is GTP cyclohydrolase MptA (267 aa).

Belongs to the GTP cyclohydrolase IV family. As to quaternary structure, homodimer. Fe(2+) is required as a cofactor.

It catalyses the reaction GTP + H2O = 7,8-dihydroneopterin 2',3'-cyclic phosphate + formate + diphosphate + H(+). Its pathway is cofactor biosynthesis; 5,6,7,8-tetrahydromethanopterin biosynthesis. Converts GTP to 7,8-dihydro-D-neopterin 2',3'-cyclic phosphate, the first intermediate in the biosynthesis of coenzyme methanopterin. The chain is GTP cyclohydrolase MptA from Thermococcus kodakarensis (strain ATCC BAA-918 / JCM 12380 / KOD1) (Pyrococcus kodakaraensis (strain KOD1)).